The sequence spans 361 residues: Phosphate acyltransferase (361 aa).

This sequence belongs to the PlsX family. As to quaternary structure, homodimer. Probably interacts with PlsY.

Its subcellular location is the cytoplasm. The catalysed reaction is a fatty acyl-[ACP] + phosphate = an acyl phosphate + holo-[ACP]. Its pathway is lipid metabolism; phospholipid metabolism. Functionally, catalyzes the reversible formation of acyl-phosphate (acyl-PO(4)) from acyl-[acyl-carrier-protein] (acyl-ACP). This enzyme utilizes acyl-ACP as fatty acyl donor, but not acyl-CoA. This Parvibaculum lavamentivorans (strain DS-1 / DSM 13023 / NCIMB 13966) protein is Phosphate acyltransferase.